We begin with the raw amino-acid sequence, 380 residues long: Cytochrome b (380 aa).

A run of 4 helical transmembrane segments spans residues 33–53 (FGSL…FLAM), 77–98 (WLIR…YLHI), 113–133 (WTIG…GYVL), and 178–198 (FFAF…IHLL). Heme b is bound by residues His-83 and His-97. Heme b contacts are provided by His-182 and His-196. His-201 is an a ubiquinone binding site. Helical transmembrane passes span 226-246 (YKDL…ALFS), 288-308 (LGGV…PFLH), 320-340 (VTQF…WIGG), and 347-367 (FVII…VLIP).

Belongs to the cytochrome b family. The cytochrome bc1 complex contains 3 respiratory subunits (MT-CYB, CYC1 and UQCRFS1), 2 core proteins (UQCRC1 and UQCRC2) and probably 6 low-molecular weight proteins. It depends on heme b as a cofactor.

The protein resides in the mitochondrion inner membrane. In terms of biological role, component of the ubiquinol-cytochrome c reductase complex (complex III or cytochrome b-c1 complex) that is part of the mitochondrial respiratory chain. The b-c1 complex mediates electron transfer from ubiquinol to cytochrome c. Contributes to the generation of a proton gradient across the mitochondrial membrane that is then used for ATP synthesis. The protein is Cytochrome b (mt-cyb) of Kareius bicoloratus (Stone flounder).